Reading from the N-terminus, the 527-residue chain is Cytochrome P450 monooygenase 3 (527 aa).

A helical transmembrane segment spans residues 21-41; the sequence is IAVAFAALCGATGLLAFSWWI. C473 contributes to the heme binding site.

This sequence belongs to the cytochrome P450 family. The cofactor is heme.

It is found in the membrane. Its pathway is plant hormone biosynthesis; gibberellin biosynthesis. Its function is as follows. Gibberellin 13-hydroxylase; part of the gene cluster that mediates the biosynthesis of gibberellins (GAs), diterpenoids that may provide a selective advantage during infection of the preferred host plant, rice. Gibberellins (GAs) are diterpenoids and are synthesized via the mevalonate pathway. Biosynthesis of the major metabolite GA3 (gibberellic acid) from geranylgeranyl diphosphate (GGPP) requires 13 steps. The GGPP produced by the geranylgeranyl diphosphate synthase GGS2 is converted to ent-kaurene via ent-copalyldiphosphate in a two-step cyclization reaction performed by the bifunctional ent-copalyl diphosphate synthase/ent-kaurene synthase enzyme (CPS/KS). Ent-Kaurene is metabolized to GAs by a series of oxidation reactions catalyzed by cytochrome P450 monooxygenases. Cytochrome P450 monooxygenase P450-4 is an ent-kaurene oxidase that catalyzes the three oxidation steps between ent-kaurene and ent-kaurenoic acid. The highly multifunctional cytochrome P450 monooxygenase P450-1 then catalyzes four steps involving oxidation at two carbon atoms, in the main pathway from ent-kaurenoic acid to GA14 via GA12-aldehyde as well as producing kaurenolides and fujenoic acids as by-products. The cytochrome P450 monooxygenase P450-2 then converts GA14 to GA4 by removal of C-20. GA4 is further converted to GA7 by the GA4 desaturase DES via 1,2-desaturation before cytochrome P450 monooxygenase P450-3, a 13-hydroxylase, hydroxylates GA7 to GA3, the final product of the GA-biosynthetic pathway. The protein is Cytochrome P450 monooygenase 3 of Gibberella fujikuroi (strain CBS 195.34 / IMI 58289 / NRRL A-6831) (Bakanae and foot rot disease fungus).